The sequence spans 341 residues: Guanine nucleotide-binding protein subunit beta (341 aa).

WD repeat units lie at residues 54–84 (GHLAKIYAMHWASDSRNLVSASQDGKLIVWD), 96–126 (LRSSWVMTCAYAPSGNFVACGGLDNICSIYS), 142–171 (GHTGYLSCCRFIDDNSIVTSSGDMSCALWD), 183–213 (GHTGDVMSLSTSPDFRTFVSGACDASAKLWD), 225–255 (GHESDINAITYFPNGHAFATGSDDATCRLFD), 269–299 (NIICGITSVAFSKSGRLLLGRYDDFNCNVWD), and 311–341 (GHDNRVSCLGVTEDGSAVATGSWDSFLKIWN).

The protein belongs to the WD repeat G protein beta family. In terms of assembly, g proteins are composed of 3 units, alpha, beta and gamma.

In terms of biological role, guanine nucleotide-binding proteins (G proteins) are involved as a modulator or transducer in various transmembrane signaling systems. The beta and gamma chains are required for the GTPase activity, for replacement of GDP by GTP, and for G protein-effector interaction. The chain is Guanine nucleotide-binding protein subunit beta from Lymnaea stagnalis (Great pond snail).